We begin with the raw amino-acid sequence, 227 residues long: uncharacterized protein (227 aa).

The stretch at 52 to 100 (NKRAKLYRERNKAKLKEKQHKWYHKGGGKEHKKLYDKINLEKSNMRDKN) forms a coiled coil.

Belongs to the mimivirus L246/L426 family.

This is an uncharacterized protein from Acanthamoeba polyphaga mimivirus (APMV).